A 343-amino-acid chain; its full sequence is L-threonine 3-dehydrogenase (343 aa).

Cys40 contributes to the Zn(2+) binding site. Residues Thr42 and His45 each act as charge relay system in the active site. 6 residues coordinate Zn(2+): His65, Glu66, Cys95, Cys98, Cys101, and Cys109. NAD(+) contacts are provided by residues Ile177, Asp197, Arg202, 264–266 (LGI), and 288–289 (IY).

It belongs to the zinc-containing alcohol dehydrogenase family. Homotetramer. Requires Zn(2+) as cofactor.

It localises to the cytoplasm. The catalysed reaction is L-threonine + NAD(+) = (2S)-2-amino-3-oxobutanoate + NADH + H(+). It functions in the pathway amino-acid degradation; L-threonine degradation via oxydo-reductase pathway; glycine from L-threonine: step 1/2. Catalyzes the NAD(+)-dependent oxidation of L-threonine to 2-amino-3-ketobutyrate. The polypeptide is L-threonine 3-dehydrogenase (Aliivibrio fischeri (strain MJ11) (Vibrio fischeri)).